Here is a 273-residue protein sequence, read N- to C-terminus: Undecaprenyl-diphosphatase (273 aa).

Transmembrane regions (helical) follow at residues 13–35 (LGVV…IIVG), 45–65 (ANTF…VMFW), 90–110 (LSLI…LIFH), 116–136 (LFNP…LIAA), 157–177 (AFVI…RSGA), 190–210 (YAAS…ATVL), 222–242 (GDVP…LIAI), and 252–272 (ISFI…YVVF).

This sequence belongs to the UppP family.

The protein resides in the cell inner membrane. The catalysed reaction is di-trans,octa-cis-undecaprenyl diphosphate + H2O = di-trans,octa-cis-undecaprenyl phosphate + phosphate + H(+). Catalyzes the dephosphorylation of undecaprenyl diphosphate (UPP). Confers resistance to bacitracin. The sequence is that of Undecaprenyl-diphosphatase from Klebsiella pneumoniae subsp. pneumoniae (strain ATCC 700721 / MGH 78578).